The chain runs to 115 residues: Large ribosomal subunit protein uL24 (115 aa).

The protein belongs to the universal ribosomal protein uL24 family. As to quaternary structure, part of the 50S ribosomal subunit.

One of two assembly initiator proteins, it binds directly to the 5'-end of the 23S rRNA, where it nucleates assembly of the 50S subunit. In terms of biological role, one of the proteins that surrounds the polypeptide exit tunnel on the outside of the subunit. The sequence is that of Large ribosomal subunit protein uL24 from Deinococcus deserti (strain DSM 17065 / CIP 109153 / LMG 22923 / VCD115).